A 105-amino-acid chain; its full sequence is Heat shock protein HspQ (105 aa).

Belongs to the HspQ family.

It localises to the cytoplasm. In terms of biological role, involved in the degradation of certain denaturated proteins, including DnaA, during heat shock stress. The protein is Heat shock protein HspQ of Sodalis glossinidius (strain morsitans).